Reading from the N-terminus, the 398-residue chain is S-adenosylmethionine synthase (398 aa).

H19 is an ATP binding site. Mg(2+) is bound at residue D21. E47 lines the K(+) pocket. Residues E60 and Q103 each contribute to the L-methionine site. A flexible loop region spans residues 103–113 (QSPDIAQGVDV). ATP contacts are provided by residues 177-179 (DGK), 243-244 (RF), D252, 258-259 (RK), A275, and K279. D252 contributes to the L-methionine binding site. K283 serves as a coordination point for L-methionine.

The protein belongs to the AdoMet synthase family. Homotetramer; dimer of dimers. It depends on Mg(2+) as a cofactor. Requires K(+) as cofactor.

It is found in the cytoplasm. The enzyme catalyses L-methionine + ATP + H2O = S-adenosyl-L-methionine + phosphate + diphosphate. The protein operates within amino-acid biosynthesis; S-adenosyl-L-methionine biosynthesis; S-adenosyl-L-methionine from L-methionine: step 1/1. Its function is as follows. Catalyzes the formation of S-adenosylmethionine (AdoMet) from methionine and ATP. The overall synthetic reaction is composed of two sequential steps, AdoMet formation and the subsequent tripolyphosphate hydrolysis which occurs prior to release of AdoMet from the enzyme. The protein is S-adenosylmethionine synthase of Symbiobacterium thermophilum (strain DSM 24528 / JCM 14929 / IAM 14863 / T).